Reading from the N-terminus, the 420-residue chain is Gamma-glutamyl phosphate reductase (420 aa).

This sequence belongs to the gamma-glutamyl phosphate reductase family.

The protein localises to the cytoplasm. It catalyses the reaction L-glutamate 5-semialdehyde + phosphate + NADP(+) = L-glutamyl 5-phosphate + NADPH + H(+). It participates in amino-acid biosynthesis; L-proline biosynthesis; L-glutamate 5-semialdehyde from L-glutamate: step 2/2. In terms of biological role, catalyzes the NADPH-dependent reduction of L-glutamate 5-phosphate into L-glutamate 5-semialdehyde and phosphate. The product spontaneously undergoes cyclization to form 1-pyrroline-5-carboxylate. The sequence is that of Gamma-glutamyl phosphate reductase from Streptococcus pneumoniae (strain P1031).